The sequence spans 874 residues: Oxysterol-binding protein-related protein 5 (874 aa).

A disordered region spans residues 1-71 (MKEEAFLRRR…PQTPGSATKV (71 aa)). Ser12 bears the Phosphoserine mark. A coiled-coil region spans residues 93-123 (VSKKDALKAQKENYRQEKKRATKQLFSALTD). One can recognise a PH domain in the interval 126–243 (VVIMADSLKI…WLDALELALR (118 aa)). 2 disordered regions span residues 255–277 (QGRD…GLPT) and 299–338 (FSDK…GPWR). A compositionally biased stretch (polar residues) spans 261-277 (QGSSPDASPSSLYGLPT). Over residues 299–308 (FSDKSERENA) the composition is skewed to basic and acidic residues. Residues 383–388 (LSRVVL), 445–448 (KPYN), and 477–478 (HH) contribute to the a 1,2-diacyl-sn-glycero-3-phospho-(1D-myo-inositol 4-phosphate) site. Residues 383–388 (LSRVVL) and Asn448 contribute to the a 1,2-diacyl-sn-glycero-3-phospho-L-serine site. Ser503 is a binding site for a 1,2-diacyl-sn-glycero-3-phospho-L-serine. Basic and acidic residues predominate over residues 660 to 684 (GDQHKATQEKSVLEEAQRQRAREHQ). 2 disordered regions span residues 660–685 (GDQH…EHQQ) and 739–798 (GQTT…GGES). 3 residues coordinate a 1,2-diacyl-sn-glycero-3-phospho-(1D-myo-inositol 4-phosphate): Lys669, Glu673, and Arg677. 2 positions are modified to phosphoserine: Ser746 and Ser749. The span at 754–764 (PSSDRRLRKAS) shows a compositional bias: basic and acidic residues. Over residues 765–782 (DQPSGHSQVTESSGSTPE) the composition is skewed to polar residues. A helical membrane pass occupies residues 855-873 (SWFLLCIFLTCQLFINYIL).

Belongs to the OSBP family.

Its subcellular location is the endoplasmic reticulum membrane. Its function is as follows. Lipid transporter involved in lipid countertransport between the endoplasmic reticulum and the plasma membrane: specifically exchanges phosphatidylserine with phosphatidylinositol 4-phosphate (PI4P), delivering phosphatidylserine to the plasma membrane in exchange for PI4P, which is degraded by the SAC1/SACM1L phosphatase in the endoplasmic reticulum. Binds phosphatidylserine and PI4P in a mutually exclusive manner. May cooperate with NPC1 to mediate the exit of cholesterol from endosomes/lysosomes. Binds 25-hydroxycholesterol and cholesterol. The protein is Oxysterol-binding protein-related protein 5 (Osbpl5) of Mus musculus (Mouse).